We begin with the raw amino-acid sequence, 135 residues long: Galectin-1 (135 aa).

Ala-2 carries the N-acetylalanine modification. Positions 4-135 constitute a Galectin domain; the sequence is GLVASNLNLK…DFKIKCVAFE (132 aa). An N6-acetyllysine mark is found at Lys-13 and Lys-29. Phosphoserine is present on Ser-30. Residues 45 to 49, His-53, Asn-62, and 69 to 72 each bind a beta-D-galactoside; these read HFNPR and WGAE. Lys-108 carries the post-translational modification N6-acetyllysine; alternate. N6-succinyllysine; alternate is present on Lys-108. At Lys-128 the chain carries N6-acetyllysine.

As to quaternary structure, homodimer. Binds LGALS3BP. Interacts with CD2, CD3, CD4, CD6, CD7, CD43, ALCAM and CD45. Interacts with laminin (via poly-N-acetyllactosamine). Interacts with SUSD2. Interacts with cargo receptor TMED10; the interaction mediates the translocation from the cytoplasm into the ERGIC (endoplasmic reticulum-Golgi intermediate compartment) and thereby secretion.

The protein localises to the secreted. It localises to the extracellular space. Its subcellular location is the extracellular matrix. The protein resides in the cytoplasm. Its function is as follows. Lectin that binds beta-galactoside and a wide array of complex carbohydrates. Plays a role in regulating apoptosis, cell proliferation and cell differentiation. Inhibits CD45 protein phosphatase activity and therefore the dephosphorylation of Lyn kinase. Strong inducer of T-cell apoptosis. This chain is Galectin-1 (LGALS1), found in Bos taurus (Bovine).